The sequence spans 156 residues: Cyanate hydratase (156 aa).

Residues arginine 96, glutamate 99, and serine 122 contribute to the active site.

Belongs to the cyanase family.

The catalysed reaction is cyanate + hydrogencarbonate + 3 H(+) = NH4(+) + 2 CO2. Functionally, catalyzes the reaction of cyanate with bicarbonate to produce ammonia and carbon dioxide. The sequence is that of Cyanate hydratase from Escherichia coli O9:H4 (strain HS).